Consider the following 519-residue polypeptide: Cyclin-dependent kinase C-1 (519 aa).

The Protein kinase domain occupies 25–325; that stretch reads FEKLEQIGEG…AQDALDAEYF (301 aa). Residues 31-39 and lysine 54 contribute to the ATP site; that span reads IGEGTYGQV. Phosphothreonine is present on threonine 35. Tyrosine 36 is subject to Phosphotyrosine. Aspartate 164 acts as the Proton acceptor in catalysis. Threonine 198 carries the post-translational modification Phosphothreonine. The segment covering 336-348 has biased composition (basic and acidic residues); sequence SLPKYESSHEFQT. Residues 336–519 form a disordered region; that stretch reads SLPKYESSHE…RNQQQYGNWQ (184 aa). The segment covering 426–444 has biased composition (gly residues); sequence GNQGGGYPNRGGQGGGGSY. Low complexity predominate over residues 445–454; sequence GNAPYPQQGR. 2 stretches are compositionally biased toward gly residues: residues 464 to 483 and 490 to 499; these read GMAG…GGGS and GPYGPSGPGR. Polar residues predominate over residues 505–519; the sequence is QQGGSRNQQQYGNWQ.

Belongs to the protein kinase superfamily. CMGC Ser/Thr protein kinase family. CDC2/CDKX subfamily.

It carries out the reaction L-seryl-[protein] + ATP = O-phospho-L-seryl-[protein] + ADP + H(+). The enzyme catalyses L-threonyl-[protein] + ATP = O-phospho-L-threonyl-[protein] + ADP + H(+). It catalyses the reaction [DNA-directed RNA polymerase] + ATP = phospho-[DNA-directed RNA polymerase] + ADP + H(+). This Oryza sativa subsp. japonica (Rice) protein is Cyclin-dependent kinase C-1 (CDKC-1).